A 500-amino-acid polypeptide reads, in one-letter code: L-arabinose isomerase (500 aa).

Residues Glu-306, Glu-333, His-350, and His-450 each coordinate Mn(2+).

It belongs to the arabinose isomerase family. In terms of assembly, homohexamer. Mn(2+) is required as a cofactor.

It carries out the reaction beta-L-arabinopyranose = L-ribulose. Its pathway is carbohydrate degradation; L-arabinose degradation via L-ribulose; D-xylulose 5-phosphate from L-arabinose (bacterial route): step 1/3. In terms of biological role, catalyzes the conversion of L-arabinose to L-ribulose. This Escherichia fergusonii (strain ATCC 35469 / DSM 13698 / CCUG 18766 / IAM 14443 / JCM 21226 / LMG 7866 / NBRC 102419 / NCTC 12128 / CDC 0568-73) protein is L-arabinose isomerase.